Consider the following 209-residue polypeptide: GTP cyclohydrolase-2 (209 aa).

49–53 (RIHSE) lines the GTP pocket. Cys-54, Cys-65, and Cys-67 together coordinate Zn(2+). Residues Gln-70, 92 to 94 (EGR), and Thr-114 contribute to the GTP site. The active-site Proton acceptor is Asp-126. The active-site Nucleophile is the Arg-128. Residues Thr-149 and Lys-154 each contribute to the GTP site.

Belongs to the GTP cyclohydrolase II family. Zn(2+) serves as cofactor.

The enzyme catalyses GTP + 4 H2O = 2,5-diamino-6-hydroxy-4-(5-phosphoribosylamino)-pyrimidine + formate + 2 phosphate + 3 H(+). It functions in the pathway cofactor biosynthesis; riboflavin biosynthesis; 5-amino-6-(D-ribitylamino)uracil from GTP: step 1/4. In terms of biological role, catalyzes the conversion of GTP to 2,5-diamino-6-ribosylamino-4(3H)-pyrimidinone 5'-phosphate (DARP), formate and pyrophosphate. This chain is GTP cyclohydrolase-2, found in Shewanella pealeana (strain ATCC 700345 / ANG-SQ1).